The primary structure comprises 1378 residues: Attractin-like protein 1 (1378 aa).

The N-terminal stretch at 1–51 is a signal peptide; the sequence is MEPGVRARSGAPQPASPVLWRARPAGGGGASSWLLLDGNSWLLCYGFLYLA. The region spanning 52-90 is the EGF-like 1 domain; that stretch reads LYAQVSQSKPCERTGSCFSGRCVNSTCLCDPGWVGDQCQ. At 52–1229 the chain is on the extracellular side; sequence LYAQVSQSKP…FSQHNTIMDL (1178 aa). 3 disulfides stabilise this stretch: Cys-62–Cys-78, Cys-80–Cys-89, and Cys-92–Cys-118. The N-linked (GlcNAc...) asparagine glycan is linked to Asn-75. Positions 92-208 constitute a CUB domain; sequence CQGRFKLTEP…TGFNIFYSIN (117 aa). 2 N-linked (GlcNAc...) asparagine glycosylation sites follow: Asn-173 and Asn-197. The 39-residue stretch at 206–244 folds into the EGF-like 2 domain; it reads SINSCPNNCSGHGKCTTSVSVASQVYCECDKYWKGEACD. 3 cysteine pairs are disulfide-bonded: Cys-210-Cys-220, Cys-214-Cys-232, and Cys-234-Cys-243. 6 Kelch repeats span residues 315–364, 366–414, 426–474, 479–530, 532–590, and 591–637; these read FMWV…LYQE, IFMY…EGHS, VMIV…SVYD, SIYV…LING, MLIF…VING, and SMYI…WNKN. Asn-379 carries N-linked (GlcNAc...) asparagine glycosylation. PSI domains lie at 613 to 656, 665 to 708, and 714 to 759; these read NCKA…AKCP, RCYR…TKCH, and ICNK…DACL. Asn-703 carries N-linked (GlcNAc...) asparagine glycosylation. The 119-residue stretch at 754–872 folds into the C-type lectin domain; that stretch reads VGDACLRINS…TSMADGLVCE (119 aa). Cys-775 and Cys-871 are joined by a disulfide. Asn-777 and Asn-897 each carry an N-linked (GlcNAc...) asparagine glycan. PSI domains lie at 888–938 and 941–1011; these read PCSL…ATCS and NCSG…IQCP. 8 disulfide bridges follow: Cys-1013-Cys-1021, Cys-1015-Cys-1027, Cys-1030-Cys-1039, Cys-1042-Cys-1056, Cys-1059-Cys-1068, Cys-1061-Cys-1075, Cys-1077-Cys-1087, and Cys-1090-Cys-1105. Laminin EGF-like domains lie at 1013-1058 and 1059-1107; these read CQCN…QCTA and CTCG…TCYY. Asn-1156 is a glycosylation site (N-linked (GlcNAc...) asparagine). Residues 1230–1250 traverse the membrane as a helical segment; it reads VQFFVTFFSCFLSLLLVAAVV. Residues 1251–1378 lie on the Cytoplasmic side of the membrane; sequence WKIKQTCWAS…HLSTRQGTCV (128 aa). Positions 1287–1324 are interaction with MC4R; that stretch reads VGAEQTDFLRGPLEGAPKPIAIEPCAGNRAAVLTVFLC. Residues 1351–1378 form a disordered region; it reads QQKPSDNKDKTSGVRNRKHLSTRQGTCV.

In terms of assembly, interacts with MC4R. Highly expressed in brain, heart, lung, kidney and liver. In the central nervous system, it is highly expressed in the dentate gyrus, CA1-3 regions of the hippocampus, and the ventral taenia tecta.

The protein resides in the cell membrane. May play a role in melanocortin signaling pathways that regulate energy homeostasis. The polypeptide is Attractin-like protein 1 (Atrnl1) (Mus musculus (Mouse)).